A 302-amino-acid polypeptide reads, in one-letter code: Acetylesterase (302 aa).

The N-terminal stretch at Met-1–Ala-21 is a signal peptide. Residues Asn-84 and Asn-101 are each glycosylated (N-linked (GlcNAc...) asparagine).

This sequence belongs to the carbohydrate esterase CE16 family.

Its subcellular location is the secreted. It catalyses the reaction an acetyl ester + H2O = an aliphatic alcohol + acetate + H(+). Its function is as follows. Acetyl esterase that acts as an exo-deacetylase. Liberates acetic acid from xylo-oligomers. This is Acetylesterase from Thermothelomyces thermophilus (Myceliophthora thermophila).